A 347-amino-acid polypeptide reads, in one-letter code: Quinolinate synthase (347 aa).

Residues His47 and Ser68 each coordinate iminosuccinate. Residue Cys113 participates in [4Fe-4S] cluster binding. Iminosuccinate contacts are provided by residues 139-141 (YAN) and Ser156. [4Fe-4S] cluster is bound at residue Cys200. Iminosuccinate is bound by residues 226–228 (HPE) and Thr243. Cys297 lines the [4Fe-4S] cluster pocket.

Belongs to the quinolinate synthase family. Type 1 subfamily. Requires [4Fe-4S] cluster as cofactor.

It is found in the cytoplasm. It catalyses the reaction iminosuccinate + dihydroxyacetone phosphate = quinolinate + phosphate + 2 H2O + H(+). It participates in cofactor biosynthesis; NAD(+) biosynthesis; quinolinate from iminoaspartate: step 1/1. In terms of biological role, catalyzes the condensation of iminoaspartate with dihydroxyacetone phosphate to form quinolinate. The chain is Quinolinate synthase from Salmonella paratyphi A (strain ATCC 9150 / SARB42).